Consider the following 135-residue polypeptide: Galectin-1 (135 aa).

Ala-2 bears the N-acetylalanine mark. In terms of domain architecture, Galectin spans 4–135 (GLVASNLNLK…DFKIKCVAFD (132 aa)). N6-acetyllysine occurs at positions 13 and 29. Ser-30 carries the phosphoserine; by FAM20C modification. A beta-D-galactoside is bound by residues 45 to 49 (HFNPR), His-53, Asn-62, and 69 to 72 (WGTE). N6-acetyllysine; alternate is present on Lys-108. At Lys-108 the chain carries N6-succinyllysine; alternate. Lys-128 carries the N6-acetyllysine modification.

In terms of assembly, homodimer. Binds LGALS3BP. Interacts with CD2, CD3, CD4, CD6, CD7, CD43, ALCAM and CD45. Interacts with laminin (via poly-N-acetyllactosamine). Interacts with SUSD2. Interacts with cargo receptor TMED10; the interaction mediates the translocation from the cytoplasm into the ERGIC (endoplasmic reticulum-Golgi intermediate compartment) and thereby secretion. Interacts with CD69. As to expression, expressed in placenta, maternal decidua and fetal membranes. Within placenta, expressed in trophoblasts, stromal cells, villous endothelium, syncytiotrophoblast apical membrane and villous stroma. Within fetal membranes, expressed in amnion, chorioamniotic mesenchyma and chorion (at protein level). Expressed in cardiac, smooth, and skeletal muscle, neurons, thymus, kidney and hematopoietic cells.

It is found in the secreted. It localises to the extracellular space. The protein localises to the extracellular matrix. Its subcellular location is the cytoplasm. Its function is as follows. Lectin that binds beta-galactoside and a wide array of complex carbohydrates. Plays a role in regulating apoptosis, cell proliferation and cell differentiation. Inhibits CD45 protein phosphatase activity and therefore the dephosphorylation of Lyn kinase. Strong inducer of T-cell apoptosis. Plays a negative role in Th17 cell differentiation via activation of the receptor CD69. In Homo sapiens (Human), this protein is Galectin-1.